The following is a 182-amino-acid chain: Urease accessory protein UreE (182 aa).

The segment at 128 to 182 (PRTEPFRPEGGAYGHGRTLGHDHGPAQGHGHDHPHVHVHISHKPDEDETPDADPA) is disordered. The span at 146-162 (LGHDHGPAQGHGHDHPH) shows a compositional bias: basic and acidic residues. Acidic residues predominate over residues 173–182 (EDETPDADPA).

It belongs to the UreE family.

The protein resides in the cytoplasm. Functionally, involved in urease metallocenter assembly. Binds nickel. Probably functions as a nickel donor during metallocenter assembly. The protein is Urease accessory protein UreE of Cereibacter sphaeroides (strain ATCC 17023 / DSM 158 / JCM 6121 / CCUG 31486 / LMG 2827 / NBRC 12203 / NCIMB 8253 / ATH 2.4.1.) (Rhodobacter sphaeroides).